The following is a 402-amino-acid chain: uncharacterized protein (402 aa).

The next 9 membrane-spanning stretches (helical) occupy residues 13–33 (IGVL…VNLA), 68–88 (FFIQ…GMVV), 108–128 (LMAL…GDIL), 149–169 (LLIW…LTSF), 223–243 (LNYF…AAAA), 261–281 (LWMA…VTDK), 283–303 (ICLL…VVYL), 327–347 (YLMQ…GLYG), and 353–373 (AGVL…HLWL).

The protein resides in the cell membrane. In terms of biological role, involved in transport. This is an uncharacterized protein from Bacillus subtilis (strain 168).